A 248-amino-acid polypeptide reads, in one-letter code: Zinc finger CCCH domain-containing protein 36 (248 aa).

Disordered stretches follow at residues 1-37 (MDTR…GLGS) and 87-110 (MQGS…VSNF). The C3H1-type 1 zinc finger occupies 36-64 (GSKSKPCTKFFSTSGCPFGENCHFLHYVP). Residues 90–103 (SGNGGRFSGRGESG) are compositionally biased toward gly residues. The region spanning 113–177 (SATARFSVDA…EQISEASAMV (65 aa)) is the KH domain. The interval 188 to 209 (AKKPPGGGLGGGGGMGSEGKPH) is disordered. The span at 192-204 (PGGGLGGGGGMGS) shows a compositional bias: gly residues. Residues 213–240 (NFKTKICERFSKGNCTFGDRCHFAHGEA) form a C3H1-type 2 zinc finger.

In Arabidopsis thaliana (Mouse-ear cress), this protein is Zinc finger CCCH domain-containing protein 36.